We begin with the raw amino-acid sequence, 952 residues long: MSDYKDTLNLPETGFPMRGNLANREPEMLKRWYDEDLYGEIRKAKKGKKSFVLHDGPPYANGDIHIGHALNKILKDIIIKSKTLSGFDAPYVPGWDCHGLPIELMVEKKKGKPGQKISAAEFREECRKYAAGQVEGQKESFKRLGVMGEWDKPYRTMDFGTEANIIRSLGKIADQGHLLKGFKPVHWCTDCGSALAEAEVEYQDKVSPSIDVRFVAADEAATLAKFSTPEGHQGEGELSVVIWTTTPWTLPANRAVALHADLEYVLVQVEAHGEQKAQRLILASELAKSVLDRANIEHYHNLGFAKGSDLELLQFNHPFYNFTVPAILGEHVTTDSGTGIVHTAPGHGQEDFVVGKKYDLEIANPVGSNGVYLPDTELFAGQHVFKANDSVLEVLKEKGALLHHHAYEHSYPHCWRHKTPIIFRATPQWFISMDQAGLRAKALEEVKSVEWMPEWGQNRIEGMIEGRPEWCISRQRTWGVPIALFVHKETAELHPDSLELIEKVAKLVEEKGIQAWWDVDAAELMGEEDAANYEKVLDTLDVWFDSGVTHFSVVDSREEYNFPEEERTHSADLYLEGSDQHRGWFQSSLISSVAMKGKAPYRQVLTHGFVVDGNGRKMSKSIGNVVAPKDVTNKLGADILRLWVASTDYTNEVAVSDEILKRSADAYRRIRNTARFFLANLSGFNPATDIVPAEEMVALDRWAVGRAFAAQQEIIKSYDEYNLHEVTQRLMHFCSIEMGSFYLDVIKDRQYTAKKGGHAQRSCQTALYYIVEALVRWMAPIMSFTADEIWNEMPGEREKFVFTGEWYQGLFDLAEGEEFNNEFWTDIQAVRASVNKLLEAARGEKVIGGALQAEVTLYADDALIAKINKLEDELRFVLLTSAATVKPLSEKTESAKATELDGLFVDVVASEAAKCERCWHHVADVGTIEGHEEVCGRCVSNIDGEGEERKFA.

Residues 58–68 (PYANGDIHIGH) carry the 'HIGH' region motif. Residue E576 participates in L-isoleucyl-5'-AMP binding. The short motif at 617 to 621 (KMSKS) is the 'KMSKS' region element. K620 provides a ligand contact to ATP. The Zn(2+) site is built by C915, C918, C935, and C938.

The protein belongs to the class-I aminoacyl-tRNA synthetase family. IleS type 1 subfamily. In terms of assembly, monomer. Zn(2+) is required as a cofactor.

The protein localises to the cytoplasm. The catalysed reaction is tRNA(Ile) + L-isoleucine + ATP = L-isoleucyl-tRNA(Ile) + AMP + diphosphate. Catalyzes the attachment of isoleucine to tRNA(Ile). As IleRS can inadvertently accommodate and process structurally similar amino acids such as valine, to avoid such errors it has two additional distinct tRNA(Ile)-dependent editing activities. One activity is designated as 'pretransfer' editing and involves the hydrolysis of activated Val-AMP. The other activity is designated 'posttransfer' editing and involves deacylation of mischarged Val-tRNA(Ile). This Aliivibrio fischeri (strain MJ11) (Vibrio fischeri) protein is Isoleucine--tRNA ligase.